We begin with the raw amino-acid sequence, 484 residues long: Glutelin type-D 1 (484 aa).

The signal sequence occupies residues 1 to 27 (MATTTSLLSSCLCALLLAPLFSQGVDA). Disulfide bonds link Cys38–Cys71 and Cys114–Cys292. Cupin type-1 domains are found at residues 43-238 (LQAF…EASK) and 298-447 (VNIE…DEAR).

It belongs to the 11S seed storage protein (globulins) family. In terms of assembly, hexamer; each subunit is composed of an acidic and a basic chain derived from a single precursor and linked by a disulfide bond.

Its subcellular location is the protein storage vacuole. In terms of biological role, seed storage protein. This is Glutelin type-D 1 from Oryza sativa subsp. japonica (Rice).